Consider the following 97-residue polypeptide: Small ribosomal subunit protein bS20 (97 aa).

The segment covering 76 to 85 (RNNGARKKAG) has biased composition (basic residues). The tract at residues 76 to 97 (RNNGARKKAGLAKALQKVSQAS) is disordered. A compositionally biased stretch (low complexity) spans 86–97 (LAKALQKVSQAS).

The protein belongs to the bacterial ribosomal protein bS20 family.

Binds directly to 16S ribosomal RNA. The sequence is that of Small ribosomal subunit protein bS20 from Microcystis aeruginosa (strain NIES-843 / IAM M-2473).